Reading from the N-terminus, the 89-residue chain is Small ribosomal subunit protein uS15 (89 aa).

Belongs to the universal ribosomal protein uS15 family. Part of the 30S ribosomal subunit. Forms a bridge to the 50S subunit in the 70S ribosome, contacting the 23S rRNA.

One of the primary rRNA binding proteins, it binds directly to 16S rRNA where it helps nucleate assembly of the platform of the 30S subunit by binding and bridging several RNA helices of the 16S rRNA. Functionally, forms an intersubunit bridge (bridge B4) with the 23S rRNA of the 50S subunit in the ribosome. The protein is Small ribosomal subunit protein uS15 of Bifidobacterium longum (strain DJO10A).